We begin with the raw amino-acid sequence, 244 residues long: tRNA (guanine-N(1)-)-methyltransferase (244 aa).

S-adenosyl-L-methionine is bound by residues glycine 114 and 134–139; that span reads IGDYVL. Residues 220–244 form a disordered region; the sequence is RRPDLLEKAGASPGKSGSNFGKHDA.

The protein belongs to the RNA methyltransferase TrmD family. Homodimer.

It is found in the cytoplasm. The catalysed reaction is guanosine(37) in tRNA + S-adenosyl-L-methionine = N(1)-methylguanosine(37) in tRNA + S-adenosyl-L-homocysteine + H(+). Functionally, specifically methylates guanosine-37 in various tRNAs. In Rhizobium johnstonii (strain DSM 114642 / LMG 32736 / 3841) (Rhizobium leguminosarum bv. viciae), this protein is tRNA (guanine-N(1)-)-methyltransferase.